A 190-amino-acid polypeptide reads, in one-letter code: MRPITILCTLATLSTTLAVPFSQASKSTSASRSTSSSTVPASLPSPTLSGPNACPPNKFKQCCTTLSQVGDDLLKPLGAVVPLVGAIQVNSLVGVSCRPMADAAPESTCGNAVMCCDSSTVGGDDLMQTSCQDFALAKKREREAIERQQRRFSEYQRMMLSQSATPAPTSTGVDVMGSSFSKAKATPTRV.

A signal peptide spans 1 to 18 (MRPITILCTLATLSTTLA). 4 disulfides stabilise this stretch: Cys-54–Cys-115, Cys-62–Cys-109, Cys-63–Cys-97, and Cys-116–Cys-131.

Belongs to the fungal hydrophobin family. As to quaternary structure, self-assembles to form functional amyloid fibrils called rodlets. Self-assembly into fibrillar rodlets occurs spontaneously at hydrophobic:hydrophilic interfaces and the rodlets further associate laterally to form amphipathic monolayers.

It localises to the secreted. The protein resides in the cell wall. In terms of biological role, aerial growth, conidiation, and dispersal of filamentous fungi in the environment rely upon a capability of their secreting small amphipathic proteins called hydrophobins (HPBs) with low sequence identity. Class I can self-assemble into an outermost layer of rodlet bundles on aerial cell surfaces, conferring cellular hydrophobicity that supports fungal growth, development and dispersal; whereas Class II form highly ordered films at water-air interfaces through intermolecular interactions but contribute nothing to the rodlet structure. RodF and rodG belong to Class III, which contains hydrophobins with intermediate (between classes I and II) or atypical characteristics. RodF, unlike rodA, is not required for rodlet formation. This chain is Class III hydrophobin F, found in Aspergillus fumigatus (strain ATCC MYA-4609 / CBS 101355 / FGSC A1100 / Af293) (Neosartorya fumigata).